A 325-amino-acid chain; its full sequence is Elongation factor P--(R)-beta-lysine ligase (325 aa).

Residue 76 to 78 (SPE) participates in substrate binding. ATP is bound by residues 100-102 (RNE) and Asn109. Substrate is bound at residue Tyr118. 244-245 (EL) lines the ATP pocket. Glu251 is a substrate binding site. An ATP-binding site is contributed by Gly300.

It belongs to the class-II aminoacyl-tRNA synthetase family. EpmA subfamily. Homodimer.

It catalyses the reaction D-beta-lysine + L-lysyl-[protein] + ATP = N(6)-((3R)-3,6-diaminohexanoyl)-L-lysyl-[protein] + AMP + diphosphate + H(+). Its function is as follows. With EpmB is involved in the beta-lysylation step of the post-translational modification of translation elongation factor P (EF-P). Catalyzes the ATP-dependent activation of (R)-beta-lysine produced by EpmB, forming a lysyl-adenylate, from which the beta-lysyl moiety is then transferred to the epsilon-amino group of a conserved specific lysine residue in EF-P. This chain is Elongation factor P--(R)-beta-lysine ligase, found in Hamiltonella defensa subsp. Acyrthosiphon pisum (strain 5AT).